A 315-amino-acid chain; its full sequence is Heme oxygenase 2 (315 aa).

Acidic residues predominate over residues 1–12; the sequence is MSSEVETSEGVD. A disordered region spans residues 1 to 28; it reads MSSEVETSEGVDESEKNSMAPEKENHTK. S2 carries the post-translational modification N-acetylserine. Phosphoserine is present on S2. Residues 2 to 294 lie on the Cytoplasmic side of the membrane; the sequence is SSEVETSEGV…TTVAVLRKPS (293 aa). A compositionally biased stretch (basic and acidic residues) spans 13 to 28; that stretch reads ESEKNSMAPEKENHTK. Residues H44, Y153, K198, and R202 each contribute to the heme b site. HRM repeat units follow at residues 263–268 and 280–285; these read KCPFYA and NCPFQT. Residues C264 and C281 each carry the S-nitrosocysteine modification. A helical; Anchor for type IV membrane protein transmembrane segment spans residues 295-315; that stretch reads LQLILAASVALVAGLLAWYYM.

This sequence belongs to the heme oxygenase family. A soluble form arises by proteolytic removal of the membrane anchor. Post-translationally, S-nitrosylated by BLVRB. In terms of tissue distribution, ubiquitous.

The protein localises to the microsome membrane. Its subcellular location is the endoplasmic reticulum membrane. The enzyme catalyses heme b + 3 reduced [NADPH--hemoprotein reductase] + 3 O2 = biliverdin IXalpha + CO + Fe(2+) + 3 oxidized [NADPH--hemoprotein reductase] + 3 H2O + H(+). Functionally, catalyzes the oxidative cleavage of heme at the alpha-methene bridge carbon, released as carbon monoxide (CO), to generate biliverdin IXalpha, while releasing the central heme iron chelate as ferrous iron. The sequence is that of Heme oxygenase 2 (Hmox2) from Mus musculus (Mouse).